We begin with the raw amino-acid sequence, 394 residues long: Elongation factor Tu-A (394 aa).

Positions 10–204 (KPHVNVGTIG…HLDTYIPEPQ (195 aa)) constitute a tr-type G domain. The segment at 19–26 (GHVDHGKT) is G1. Residue 19–26 (GHVDHGKT) coordinates GTP. T26 is a Mg(2+) binding site. Positions 60-64 (GITIN) are G2. Residues 81–84 (DCPG) form a G3 region. Residues 81–85 (DCPGH) and 136–139 (NKCD) each bind GTP. The segment at 136–139 (NKCD) is G4. The G5 stretch occupies residues 174–176 (SAL).

Belongs to the TRAFAC class translation factor GTPase superfamily. Classic translation factor GTPase family. EF-Tu/EF-1A subfamily. In terms of assembly, monomer.

Its subcellular location is the cytoplasm. It carries out the reaction GTP + H2O = GDP + phosphate + H(+). Functionally, GTP hydrolase that promotes the GTP-dependent binding of aminoacyl-tRNA to the A-site of ribosomes during protein biosynthesis. The protein is Elongation factor Tu-A of Pasteurella multocida (strain Pm70).